The following is a 214-amino-acid chain: Type IV major pilin protein PilE1 (214 aa).

Positions 1 to 7 (MNTLQKG) are cleaved as a propeptide — leader sequence. An N-methylphenylalanine modification is found at F8. Residues 8–28 (FTLIELMIVIAIVGILAAVAL) traverse the membrane as a helical segment. Residues C127 and C161 are joined by a disulfide bond. Residues 182–214 (AGTDAVTADTTGKDKEIDTKHLPSTCRDKSSAE) are disordered. The span at 192-214 (TGKDKEIDTKHLPSTCRDKSSAE) shows a compositional bias: basic and acidic residues.

This sequence belongs to the N-Me-Phe pilin family. The pili are polar flexible filaments of about 5.4 nanometers diameter and 2.5 micrometers average length; they consist of only a single polypeptide chain arranged in a helical configuration of five subunits per turn in the assembled pilus.

The protein localises to the fimbrium. It localises to the membrane. Functionally, major component of the type IV pilus (T4P) that plays a role in cellular adherence, microcolony formation, resistance to neutrophil mediated killing, twitching motility as well as transformation. Mediates the attachment and the formation of bacterial microcolonies on host epithelial cells. Mechanistically, pili retractation induces host NF-kappa-B activation in infected cells, which is temporally associated with the formation of gonococcal microcolonies. This is Type IV major pilin protein PilE1 (pilE1) from Neisseria gonorrhoeae.